The chain runs to 163 residues: Nucleotide-binding protein PM1656 (163 aa).

The protein belongs to the YajQ family.

Nucleotide-binding protein. In Pasteurella multocida (strain Pm70), this protein is Nucleotide-binding protein PM1656.